The following is an 83-amino-acid chain: U5-theraphotoxin-Hs1a 1 (83 aa).

An N-terminal signal peptide occupies residues 1-21 (MKTSMFLTLTGLGLLFVVCYA). A propeptide spanning residues 22–49 (SESEEKEFPKELLSSIFAADSDFKVEER) is cleaved from the precursor. Cystine bridges form between cysteine 51-cysteine 63, cysteine 56-cysteine 68, and cysteine 62-cysteine 75.

The protein belongs to the neurotoxin 10 (Hwtx-1) family. 51 (Hntx-8) subfamily. Hntx-8 sub-subfamily. In terms of tissue distribution, expressed by the venom gland.

It localises to the secreted. In terms of biological role, agglutinates human and mice erythrocytes. This activity can be specifically inhibited by mannosamine. This lectin shows very low toxicity in both mammals and insects. The chain is U5-theraphotoxin-Hs1a 1 from Cyriopagopus schmidti (Chinese bird spider).